The chain runs to 350 residues: tRNA uridine(34) hydroxylase (350 aa).

The Rhodanese domain occupies 146–240; the sequence is DDPDAVFIDM…YARRARAQGL (95 aa). Cys200 serves as the catalytic Cysteine persulfide intermediate. Positions 319–328 are enriched in basic and acidic residues; the sequence is RRRRAGRENG. Residues 319–350 are disordered; that stretch reads RRRRAGRENGNKIFNKSRGRLNSKLSIPDPAE.

The protein belongs to the TrhO family.

It catalyses the reaction uridine(34) in tRNA + AH2 + O2 = 5-hydroxyuridine(34) in tRNA + A + H2O. Its function is as follows. Catalyzes oxygen-dependent 5-hydroxyuridine (ho5U) modification at position 34 in tRNAs. This Salmonella typhimurium (strain LT2 / SGSC1412 / ATCC 700720) protein is tRNA uridine(34) hydroxylase.